Consider the following 130-residue polypeptide: MARVTVEDCIDKVDNRFDLVLLAAHRARMISSGSPLTIDRDNDKNPVVSLREIADQTISPEDLKEELVHSLQKFVEVDEPEPDTVPLIGSAGASVDADDTEVAMERMTEEELLKGLEGLAPPEEQPEEDE.

Residues 108 to 130 (TEEELLKGLEGLAPPEEQPEEDE) form a disordered region.

It belongs to the RNA polymerase subunit omega family. In terms of assembly, the RNAP catalytic core consists of 2 alpha, 1 beta, 1 beta' and 1 omega subunit. When a sigma factor is associated with the core the holoenzyme is formed, which can initiate transcription.

It carries out the reaction RNA(n) + a ribonucleoside 5'-triphosphate = RNA(n+1) + diphosphate. Its function is as follows. Promotes RNA polymerase assembly. Latches the N- and C-terminal regions of the beta' subunit thereby facilitating its interaction with the beta and alpha subunits. This Rhodopseudomonas palustris (strain ATCC BAA-98 / CGA009) protein is DNA-directed RNA polymerase subunit omega.